The chain runs to 369 residues: Phosphate acyltransferase (369 aa).

The protein belongs to the PlsX family. In terms of assembly, homodimer. Probably interacts with PlsY.

The protein resides in the cytoplasm. It catalyses the reaction a fatty acyl-[ACP] + phosphate = an acyl phosphate + holo-[ACP]. It functions in the pathway lipid metabolism; phospholipid metabolism. Functionally, catalyzes the reversible formation of acyl-phosphate (acyl-PO(4)) from acyl-[acyl-carrier-protein] (acyl-ACP). This enzyme utilizes acyl-ACP as fatty acyl donor, but not acyl-CoA. This is Phosphate acyltransferase from Gluconobacter oxydans (strain 621H) (Gluconobacter suboxydans).